The following is a 333-amino-acid chain: Ribosomal protein L11 methyltransferase (333 aa).

Residues Thr160, Gly181, Asp203, and Asn267 each coordinate S-adenosyl-L-methionine.

It belongs to the methyltransferase superfamily. PrmA family.

It is found in the cytoplasm. It carries out the reaction L-lysyl-[protein] + 3 S-adenosyl-L-methionine = N(6),N(6),N(6)-trimethyl-L-lysyl-[protein] + 3 S-adenosyl-L-homocysteine + 3 H(+). Methylates ribosomal protein L11. The polypeptide is Ribosomal protein L11 methyltransferase (Lachnoclostridium phytofermentans (strain ATCC 700394 / DSM 18823 / ISDg) (Clostridium phytofermentans)).